The primary structure comprises 886 residues: Interference hedgehog (886 aa).

A signal peptide spans 1 to 20 (MTLLTSSLLLFSLLTSRLEA). Residues 21–709 (IPVLEKSPAH…ETFNMSPMLT (689 aa)) are Extracellular-facing. Positions 29-38 (AHPAHSAHPA) are enriched in low complexity. The interval 29 to 52 (AHPAHSAHPAHPAHPAHPAHPSPG) is disordered. 4 Ig-like C2-type domains span residues 51-148 (PGVR…IARL), 138-238 (PLVV…ERIQ), 258-346 (PHLL…YIKV), and 352-438 (PQIV…LQVN). Disulfide bonds link cysteine 74-cysteine 132, cysteine 179-cysteine 226, cysteine 282-cysteine 330, and cysteine 373-cysteine 420. Residues asparagine 108 and asparagine 215 are each glycosylated (N-linked (GlcNAc...) asparagine). The disordered stretch occupies residues 432-475 (GTLLQVNPKQIQEPRESGGTHRPKPNQGSRQKQMYPPTPPNVTR). Fibronectin type-III domains lie at 467-573 (PPTP…LQPG) and 581-676 (VPEL…TQRP). Asparagine 472 carries an N-linked (GlcNAc...) asparagine glycan. Arginine 503, lysine 507, lysine 509, and arginine 547 together coordinate heparin. Residue asparagine 563 is glycosylated (N-linked (GlcNAc...) asparagine). The tract at residues 668–697 (LKQGRTQRPKTSTTEEPTLQMGDRDTTTPS) is disordered. The segment covering 671–684 (GRTQRPKTSTTEEP) has biased composition (polar residues). Residue asparagine 699 is glycosylated (N-linked (GlcNAc...) asparagine). Residues 710–730 (GTIGGGAVLILLLISTCFCVC) traverse the membrane as a helical segment. Topologically, residues 731-886 (RRRNSRSRGN…SSGSLNSVGV (156 aa)) are cytoplasmic. Disordered regions lie at residues 734-768 (NSRS…QRQR) and 781-886 (QQQQ…SVGV). 2 stretches are compositionally biased toward low complexity: residues 829 to 843 (RAGG…NNNN) and 870 to 886 (SSRS…SVGV).

The protein belongs to the immunoglobulin superfamily. IHOG family. As to quaternary structure, homodimer. Heterotetramer; 2 iHog chains bind 2 hh chains when facilitated by heparin, heparin is required to promote high-affinity interactions between hh and iHog.

It localises to the membrane. Mediates response to the active Hedgehog (Hh) protein signal in embryos, functioning upstream or at the level of patched (ptc). In Drosophila melanogaster (Fruit fly), this protein is Interference hedgehog (ihog).